Here is a 464-residue protein sequence, read N- to C-terminus: MALKIDFNNVFHPYLQKERLGEADIDGYKEKFTSALVSLREKKEKGELGFFHLPYLPEEEIAEIEKTAREVREKFKYFVVLGIGGSALGPLAVHTALNNLRYNELSEELRGGPKFYVEDNIDPERMASLLKVIEPEKTVFNVITKSGATAETLSQLLIVTEVLKKKVGKRFTEHLIFTTDPEKGSLRALARELGVKTFAIPPNVGGRFSELTPVGLLPAAVTGINIRELLAGAREMAERCERENLWENPAGLAAAIHVLLLERGKNMAVMMPYADSLKYMADWYAQLLGESIGKRLNRRGEEVFVGQTPVKALGVTDQHSQVQLYTEGPFDKLLIFLEVERYRNRVVIPPDFPQYAELKFLGGHTLNELIIAEKKATEFALLKARRPNYTVIFPEVNPYTVGELLYFLEAKIAFMGEYLDINAFDQPGVEEGKKATYALLGREGFEEKRQEVLKVKKEPRFILE.

Residue glutamate 290 is the Proton donor of the active site. Catalysis depends on residues histidine 319 and lysine 433.

It belongs to the GPI family.

Its subcellular location is the cytoplasm. It carries out the reaction alpha-D-glucose 6-phosphate = beta-D-fructose 6-phosphate. Its pathway is carbohydrate biosynthesis; gluconeogenesis. The protein operates within carbohydrate degradation; glycolysis; D-glyceraldehyde 3-phosphate and glycerone phosphate from D-glucose: step 2/4. Its function is as follows. Catalyzes the reversible isomerization of glucose-6-phosphate to fructose-6-phosphate. The sequence is that of Glucose-6-phosphate isomerase from Carboxydothermus hydrogenoformans (strain ATCC BAA-161 / DSM 6008 / Z-2901).